Here is an 89-residue protein sequence, read N- to C-terminus: Small ribosomal subunit protein uS15 (89 aa).

It belongs to the universal ribosomal protein uS15 family. As to quaternary structure, part of the 30S ribosomal subunit. Forms a bridge to the 50S subunit in the 70S ribosome, contacting the 23S rRNA.

One of the primary rRNA binding proteins, it binds directly to 16S rRNA where it helps nucleate assembly of the platform of the 30S subunit by binding and bridging several RNA helices of the 16S rRNA. Its function is as follows. Forms an intersubunit bridge (bridge B4) with the 23S rRNA of the 50S subunit in the ribosome. This Haemophilus influenzae (strain 86-028NP) protein is Small ribosomal subunit protein uS15.